Here is a 207-residue protein sequence, read N- to C-terminus: Ras-related protein Rab-7a (207 aa).

The residue at position 2 (Thr2) is an N-acetylthreonine. GTP contacts are provided by Ser17, Gly18, Val19, Gly20, Lys21, Thr22, Ser23, Ser34, Asn35, Tyr37, and Thr40. Position 22 (Thr22) interacts with Mg(2+). The Switch 1 motif lies at 28–41 (YVNKKFSNQYKATI). Mg(2+) is bound by residues Thr40 and Asp63. Gly66 is a binding site for GTP. The Switch 2 motif lies at 67–82 (QERFQSLGVAFYRGAD). At Ser72 the chain carries Phosphoserine. GTP is bound by residues Asn125, Lys126, Asp128, Ala156, and Lys157. Residues Lys191 and Lys194 each participate in a glycyl lysine isopeptide (Lys-Gly) (interchain with G-Cter in ubiquitin) cross-link. Residues Cys205 and Cys207 are each lipidated (S-geranylgeranyl cysteine). A Cysteine methyl ester modification is found at Cys207.

It belongs to the small GTPase superfamily. Rab family. As to quaternary structure, interacts with NTRK1/TRKA. Interacts with RILP. Interacts with PSMA7. Interacts with RNF115. Interacts with FYCO1. Interacts with the PIK3C3/VPS34-PIK3R4 complex. The GTP-bound form interacts with OSBPL1A. The GTP-bound form interacts with RAC1. Interacts with CLN3. Interacts with CHM, the substrate-binding subunit of the Rab geranylgeranyltransferase complex. Interacts with C9orf72. Does not interact with HPS4 and the BLOC-3 complex (heterodimer of HPS1 and HPS4). Interacts with CLN5. Interacts with PLEKHM1 (via N- and C-terminus). Interacts with PRPH; the interaction is direct. Interacts with VPS13A. The GDP-bound form interacts with RIMOC1. Interacts with the MON1A-CCZ1B complex and this interaction is enhanced in the presence of RIMOC1. Interacts with VPS39 and VPS41. Forms a ternary complex with LAMP2 and RUFY4; the interaction with LAMP2 is mediated by RUFY4 (via RUN and coiled coil domains). It depends on Mg(2+) as a cofactor. In terms of processing, deubiquitination at Lys-191 and Lys-194 by USP32. Phosphorylated at Ser-72 by LRRK1; phosphorylation is dependent on protein kinase C (PKC) activation of LRRK1. Post-translationally, prenylated. Prenylation is required for association with cellular membranes.

The protein resides in the cytoplasmic vesicle. The protein localises to the phagosome membrane. It localises to the late endosome membrane. It is found in the lysosome membrane. Its subcellular location is the melanosome membrane. The protein resides in the autophagosome membrane. The protein localises to the lipid droplet. It localises to the endosome membrane. It is found in the mitochondrion membrane. It carries out the reaction GTP + H2O = GDP + phosphate + H(+). With respect to regulation, regulated by guanine nucleotide exchange factors (GEFs) which promote the exchange of bound GDP for free GTP. Regulated by GTPase activating proteins (GAPs) which increase the GTP hydrolysis activity. Inhibited by GDP dissociation inhibitors (GDIs). The small GTPases Rab are key regulators of intracellular membrane trafficking, from the formation of transport vesicles to their fusion with membranes. Rabs cycle between an inactive GDP-bound form and an active GTP-bound form that is able to recruit to membranes different sets of downstream effectors directly responsible for vesicle formation, movement, tethering and fusion. In its active state, RAB7A binds to a variety of effector proteins playing a key role in the regulation of endo-lysosomal trafficking. Governs early-to-late endosomal maturation, microtubule minus-end as well as plus-end directed endosomal migration and positioning, and endosome-lysosome transport through different protein-protein interaction cascades. Also plays a central role in growth-factor-mediated cell signaling, nutrient-transporter-mediated nutrient uptake, neurotrophin transport in the axons of neurons and lipid metabolism. Also involved in regulation of some specialized endosomal membrane trafficking, such as maturation of melanosomes, pathogen-induced phagosomes (or vacuoles) and autophagosomes. Plays a role in the maturation and acidification of phagosomes that engulf pathogens, such as S.aureus and Mycobacteria. Plays a role in the fusion of phagosomes with lysosomes. In concert with RAC1, plays a role in regulating the formation of RBs (ruffled borders) in osteoclasts. Controls the endosomal trafficking and neurite outgrowth signaling of NTRK1/TRKA. Regulates the endocytic trafficking of the EGF-EGFR complex by regulating its lysosomal degradation. Involved in the ADRB2-stimulated lipolysis through lipophagy, a cytosolic lipase-independent autophagic pathway. Required for the exosomal release of SDCBP, CD63 and syndecan. Required for vesicular trafficking and cell surface expression of ACE2. May play a role in PRPH neuronal intermediate filament assembly. The chain is Ras-related protein Rab-7a (RAB7A) from Canis lupus familiaris (Dog).